The following is a 341-amino-acid chain: Ferrochelatase (341 aa).

Residues H189 and E293 each coordinate Fe cation.

Belongs to the ferrochelatase family.

The protein resides in the cytoplasm. It catalyses the reaction heme b + 2 H(+) = protoporphyrin IX + Fe(2+). The protein operates within porphyrin-containing compound metabolism; protoheme biosynthesis; protoheme from protoporphyrin-IX: step 1/1. Catalyzes the ferrous insertion into protoporphyrin IX. This is Ferrochelatase from Pseudomonas fluorescens (strain Pf0-1).